We begin with the raw amino-acid sequence, 335 residues long: Lipoyl synthase (335 aa).

7 residues coordinate [4Fe-4S] cluster: C55, C60, C66, C81, C85, C88, and S292. Residues 67–281 (WEDREATFLI…SKAAEEIGFL (215 aa)) enclose the Radical SAM core domain.

It belongs to the radical SAM superfamily. Lipoyl synthase family. It depends on [4Fe-4S] cluster as a cofactor.

The protein resides in the cytoplasm. The enzyme catalyses [[Fe-S] cluster scaffold protein carrying a second [4Fe-4S](2+) cluster] + N(6)-octanoyl-L-lysyl-[protein] + 2 oxidized [2Fe-2S]-[ferredoxin] + 2 S-adenosyl-L-methionine + 4 H(+) = [[Fe-S] cluster scaffold protein] + N(6)-[(R)-dihydrolipoyl]-L-lysyl-[protein] + 4 Fe(3+) + 2 hydrogen sulfide + 2 5'-deoxyadenosine + 2 L-methionine + 2 reduced [2Fe-2S]-[ferredoxin]. It participates in protein modification; protein lipoylation via endogenous pathway; protein N(6)-(lipoyl)lysine from octanoyl-[acyl-carrier-protein]: step 2/2. In terms of biological role, catalyzes the radical-mediated insertion of two sulfur atoms into the C-6 and C-8 positions of the octanoyl moiety bound to the lipoyl domains of lipoate-dependent enzymes, thereby converting the octanoylated domains into lipoylated derivatives. The chain is Lipoyl synthase from Kocuria rhizophila (strain ATCC 9341 / DSM 348 / NBRC 103217 / DC2201).